The chain runs to 34 residues: MEVNILAFIATALFILIPTAFLLILYVQTAAQNN.

A helical membrane pass occupies residues 5 to 25; that stretch reads ILAFIATALFILIPTAFLLIL.

Belongs to the PsbM family. As to quaternary structure, PSII is composed of 1 copy each of membrane proteins PsbA, PsbB, PsbC, PsbD, PsbE, PsbF, PsbH, PsbI, PsbJ, PsbK, PsbL, PsbM, PsbT, PsbX, PsbY, PsbZ, Psb30/Ycf12, at least 3 peripheral proteins of the oxygen-evolving complex and a large number of cofactors. It forms dimeric complexes.

Its subcellular location is the plastid. The protein localises to the chloroplast thylakoid membrane. One of the components of the core complex of photosystem II (PSII). PSII is a light-driven water:plastoquinone oxidoreductase that uses light energy to abstract electrons from H(2)O, generating O(2) and a proton gradient subsequently used for ATP formation. It consists of a core antenna complex that captures photons, and an electron transfer chain that converts photonic excitation into a charge separation. This subunit is found at the monomer-monomer interface. The polypeptide is Photosystem II reaction center protein M (Angiopteris evecta (Mule's foot fern)).